The following is a 373-amino-acid chain: tRNA N6-adenosine threonylcarbamoyltransferase (373 aa).

A divalent metal cation contacts are provided by H128, H132, and Y149. Substrate-binding positions include 149–153 (YVSGG), D181, G196, E200, and N302. D331 is an a divalent metal cation binding site.

This sequence belongs to the KAE1 / TsaD family. In terms of assembly, component of the EKC/KEOPS complex composed of at least BUD32, CGI121, GON7, KAE1 and PCC1; the whole complex dimerizes. It depends on a divalent metal cation as a cofactor.

Its subcellular location is the cytoplasm. The protein localises to the nucleus. It catalyses the reaction L-threonylcarbamoyladenylate + adenosine(37) in tRNA = N(6)-L-threonylcarbamoyladenosine(37) in tRNA + AMP + H(+). Its function is as follows. Component of the EKC/KEOPS complex that is required for the formation of a threonylcarbamoyl group on adenosine at position 37 (t(6)A37) in tRNAs that read codons beginning with adenine. The complex is probably involved in the transfer of the threonylcarbamoyl moiety of threonylcarbamoyl-AMP (TC-AMP) to the N6 group of A37. KAE1 likely plays a direct catalytic role in this reaction, but requires other protein(s) of the complex to fulfill this activity. The EKC/KEOPS complex also promotes both telomere uncapping and telomere elongation. The complex is required for efficient recruitment of transcriptional coactivators. In Candida glabrata (strain ATCC 2001 / BCRC 20586 / JCM 3761 / NBRC 0622 / NRRL Y-65 / CBS 138) (Yeast), this protein is tRNA N6-adenosine threonylcarbamoyltransferase.